A 140-amino-acid polypeptide reads, in one-letter code: L-fucose mutarotase (140 aa).

His-22 functions as the Proton donor in the catalytic mechanism. Substrate contacts are provided by residues Asp-30, Arg-107, and 129-131 (YGN).

The protein belongs to the RbsD / FucU family. FucU mutarotase subfamily. In terms of assembly, homodecamer.

The protein resides in the cytoplasm. The catalysed reaction is alpha-L-fucose = beta-L-fucose. It participates in carbohydrate metabolism; L-fucose metabolism. Involved in the anomeric conversion of L-fucose. In Salmonella paratyphi B (strain ATCC BAA-1250 / SPB7), this protein is L-fucose mutarotase.